A 73-amino-acid polypeptide reads, in one-letter code: Dermaseptin-H4 (73 aa).

An N-terminal signal peptide occupies residues 1–22 (MAFMKKSLFLVLFLGMVSLSIC). The propeptide occupies 23 to 43 (EEEKRENEDEAKQEDDEQSEM). Residues 25-45 (EKRENEDEAKQEDDEQSEMKR) are disordered. The segment covering 30 to 40 (EDEAKQEDDEQ) has biased composition (acidic residues). Leu-70 carries the leucine amide modification. Positions 72 to 73 (EQ) are excised as a propeptide.

Expressed by the skin glands.

It is found in the secreted. Has antibacterial activity against the Gram-negative bacteria E.coli ATCC 11775 (MIC=0.8 uM), and the Gram-positive bacteria S.aureus ATCC 12600 (MIC=0.4 uM) and M.luteus ATCC 49732 (MIC=0.8 uM). Does not inhibit the growth of the fungus C.albicans. Probably acts by disturbing membrane functions with its amphipathic structure. The protein is Dermaseptin-H4 of Pithecopus azureus (Orange-legged monkey tree frog).